Consider the following 199-residue polypeptide: Putative AgrB-like protein (199 aa).

5 helical membrane passes run 43-63 (IIIFLVFLFIKEIPLFLFSFI), 81-101 (YGCLTCSILYFMIILLFTRLF), 108-128 (FYIVFFILSLAITFIFAPCPN), 139-159 (LKILSLISLTFWIILFYLSPL), and 165-185 (ILISIFLQIIQVIIINTKGVI).

The protein belongs to the AgrB family.

The protein resides in the cell membrane. Functionally, may be involved in the proteolytic processing of a quorum sensing system signal molecule precursor. This chain is Putative AgrB-like protein (cfg02), found in Clostridium beijerinckii (Clostridium MP).